A 1953-amino-acid chain; its full sequence is Putative surface-exposed virulence protein BigA (1953 aa).

The first 27 residues, 1–27 (MNPMQKKKLISIAIALTLQSYYIPAIA), serve as a signal peptide directing secretion. 3 disordered regions span residues 31–50 (NDDE…EKRA), 88–258 (GGGD…TFSN), and 1496–1517 (TTAP…PQQL). The 1; truncated repeat unit spans residues 101-103 (PDN). The interval 101–252 (PDNGGDVTPP…DDDDTPPDDS (152 aa)) is 15 X 11 AA tandem repeats. The 2; truncated repeat unit spans residues 104–113 (GGDVTPPDDG). The 3; truncated repeat unit spans residues 114-122 (GNVTPPDDG). 11 tandem repeats follow at residues 123-133 (GNVTPPDDGGD), 134-144 (DNVTPPDDSGD), 145-155 (DDVAPPDDSGD), 156-166 (DDVTPPDDSGD), 167-177 (DDVTPPDDSGD), 178-188 (GDVTPPDDSGD), 189-199 (DDVTPPDDSGD), 200-210 (DDVTPPDDSGD), 211-221 (DDVTPPDDSGD), 222-232 (DDVTPPDDSGD), and 233-243 (DDVTPPDDSGD). Composition is skewed to acidic residues over residues 141–177 (DSGD…DSGD) and 185–249 (DSGD…DTPP). The stretch at 244 to 252 (DDDTPPDDS) is one 15; truncated repeat. The Autotransporter domain occupies 1649–1952 (SGAQATTVFR…GFMLNVKKTF (304 aa)).

The sequence is that of Putative surface-exposed virulence protein BigA (bigA) from Salmonella typhimurium (strain LT2 / SGSC1412 / ATCC 700720).